We begin with the raw amino-acid sequence, 1014 residues long: 2-oxoglutarate dehydrogenase, mitochondrial (1014 aa).

The transit peptide at 1–30 (MLRFVSSQTCRYSSRGLLKTSLLKNASTVK) directs the protein to the mitochondrion. Residues R306, D406, N439, and I441 each contribute to the thiamine diphosphate site. The Mg(2+) site is built by D406, N439, and I441.

Belongs to the alpha-ketoglutarate dehydrogenase family. Component of the 2-oxoglutarate dehydrogenase complex (OGDC), also called alpha-ketoglutarate dehydrogenase (KGDH) complex. The copmplex is composed of the catalytic subunits OGDH (2-oxoglutarate dehydrogenase KGD1; also called E1 subunit), DLST (dihydrolipoamide succinyltransferase KGD2; also called E2 subunit) and DLD (dihydrolipoamide dehydrogenase LPD1; also called E3 subunit), and the assembly factor KGD4. It depends on thiamine diphosphate as a cofactor. Mg(2+) serves as cofactor.

Its subcellular location is the mitochondrion. The protein resides in the mitochondrion matrix. It is found in the mitochondrion nucleoid. It catalyses the reaction N(6)-[(R)-lipoyl]-L-lysyl-[protein] + 2-oxoglutarate + H(+) = N(6)-[(R)-S(8)-succinyldihydrolipoyl]-L-lysyl-[protein] + CO2. With respect to regulation, catabolite repressed. The 2-oxoglutarate dehydrogenase complex catalyzes the overall conversion of 2-oxoglutarate to succinyl-CoA and CO(2). It contains multiple copies of three enzymatic components: 2-oxoglutarate dehydrogenase (E1), dihydrolipoamide succinyltransferase (E2) and lipoamide dehydrogenase (E3). This chain is 2-oxoglutarate dehydrogenase, mitochondrial (KGD1), found in Saccharomyces cerevisiae (strain ATCC 204508 / S288c) (Baker's yeast).